Consider the following 294-residue polypeptide: Cytidine deaminase (294 aa).

CMP/dCMP-type deaminase domains lie at aspartate 48 to lysine 168 and leucine 186 to alanine 294. Asparagine 89–glutamate 91 provides a ligand contact to substrate. Histidine 102 contacts Zn(2+). The active-site Proton donor is the glutamate 104. Cysteine 129 and cysteine 132 together coordinate Zn(2+).

The protein belongs to the cytidine and deoxycytidylate deaminase family. As to quaternary structure, homodimer. Requires Zn(2+) as cofactor.

It carries out the reaction cytidine + H2O + H(+) = uridine + NH4(+). The catalysed reaction is 2'-deoxycytidine + H2O + H(+) = 2'-deoxyuridine + NH4(+). This enzyme scavenges exogenous and endogenous cytidine and 2'-deoxycytidine for UMP synthesis. The sequence is that of Cytidine deaminase from Escherichia coli (strain ATCC 8739 / DSM 1576 / NBRC 3972 / NCIMB 8545 / WDCM 00012 / Crooks).